The primary structure comprises 128 residues: Iron-sulfur cluster insertion protein ErpA (128 aa).

C56, C120, and C122 together coordinate iron-sulfur cluster.

Belongs to the HesB/IscA family. In terms of assembly, homodimer. Iron-sulfur cluster serves as cofactor.

Functionally, required for insertion of 4Fe-4S clusters for at least IspG. This chain is Iron-sulfur cluster insertion protein ErpA, found in Xylella fastidiosa (strain M12).